We begin with the raw amino-acid sequence, 105 residues long: Protein LITTLE ZIPPER 2 (105 aa).

A disordered region spans residues 1-20 (MCLTTSEPPFPDTDTPTMRS). Positions 39-60 (NLTRRRRLLKEQKEMEMRNLKL) form a coiled coil.

Interacts with REV.

Competitive inhibitor of the HD-ZIPIII transcription factors in shoot apical meristem (SAM) development. Acts by forming non-functional heterodimers. Part of a negative feedback loop. Essential for proper functioning of stem cells in the SAM. This is Protein LITTLE ZIPPER 2 from Arabidopsis thaliana (Mouse-ear cress).